Here is a 2603-residue protein sequence, read N- to C-terminus: Protein SABRE (2603 aa).

Positions 1–35 (MAASPAKFFFGFLIVSIVLWMIFMLFAWMLSRVLG) are cleaved as a signal peptide. An N-linked (GlcNAc...) asparagine glycan is attached at asparagine 196. A disordered region spans residues 259–287 (FPKSKQSSASLRSDEVRTSATAASSAKKP). Residues asparagine 331, asparagine 486, asparagine 597, asparagine 807, asparagine 867, asparagine 887, asparagine 1154, asparagine 1249, asparagine 1280, and asparagine 1408 are each glycosylated (N-linked (GlcNAc...) asparagine). The tract at residues 786–814 (PESGCNKGISSVKDGGPSEKINQSNSVNK) is disordered. Residues 1416 to 1436 (FHQSPSSTEHPTDVGTVYSSQ) form a disordered region. N-linked (GlcNAc...) asparagine glycosylation is found at asparagine 1492 and asparagine 1659. Disordered regions lie at residues 1656–1676 (EFEN…DDDG) and 1717–1777 (EPPK…DDIG). The span at 1731–1748 (KIHEENQKESCPETHQGE) shows a compositional bias: basic and acidic residues. Positions 1749 to 1766 (MSRSSASPGRNLPSSPSH) are enriched in polar residues. Positions 1995-2023 (VEEVELAKINLEEKERERKLLLDDIRKLS) form a coiled coil. Asparagine 2333 carries N-linked (GlcNAc...) asparagine glycosylation. 3 disordered regions span residues 2339–2380 (EQQE…RPRK), 2448–2479 (GKKF…KPDQ), and 2554–2603 (IRRH…DFRE). Basic and acidic residues predominate over residues 2343 to 2380 (DFSKQKVKEIKPVKSGRSSHEEKKAGKSHEEKKSRPRK). Asparagine 2467 carries an N-linked (GlcNAc...) asparagine glycan. A compositionally biased stretch (basic residues) spans 2554-2565 (IRRHTKKFRPRS). Residues 2566–2583 (QRGSTSQQRESLPSSPIE) are compositionally biased toward polar residues. The span at 2586–2603 (PFESGYSSGSSPYEDFRE) shows a compositional bias: low complexity.

It belongs to the SABRE family. As to expression, highest levels in leaves, also expressed in leaves, flowers, and siliques, and, to a lower extent, in roots and stems.

Its subcellular location is the secreted. The protein localises to the golgi apparatus. In terms of biological role, may be involved in membrane trafficking. Required for cell expansion, especially in root cortex, probably by counteracting the action of ethylene in promoting cells radial expansion. Involved in female organ development. Antagonistically interacts with ethylene signaling to regulate plant responses to Pi starvation. The polypeptide is Protein SABRE (Arabidopsis thaliana (Mouse-ear cress)).